We begin with the raw amino-acid sequence, 380 residues long: 1-deoxy-D-xylulose 5-phosphate reductoisomerase (380 aa).

Residues Ser10, Gly11, Ser12, Ile13, Gly36, Lys37, Asn38, and Asn120 each contribute to the NADPH site. Residue Lys121 coordinates 1-deoxy-D-xylulose 5-phosphate. An NADPH-binding site is contributed by Glu122. Position 146 (Asp146) interacts with Mn(2+). Ser147, Glu148, Ser172, and His195 together coordinate 1-deoxy-D-xylulose 5-phosphate. Glu148 serves as a coordination point for Mn(2+). Gly201 is a binding site for NADPH. Ser208, Asn213, Lys214, and Glu217 together coordinate 1-deoxy-D-xylulose 5-phosphate. Position 217 (Glu217) interacts with Mn(2+).

This sequence belongs to the DXR family. Mg(2+) serves as cofactor. Mn(2+) is required as a cofactor.

The enzyme catalyses 2-C-methyl-D-erythritol 4-phosphate + NADP(+) = 1-deoxy-D-xylulose 5-phosphate + NADPH + H(+). It participates in isoprenoid biosynthesis; isopentenyl diphosphate biosynthesis via DXP pathway; isopentenyl diphosphate from 1-deoxy-D-xylulose 5-phosphate: step 1/6. Its function is as follows. Catalyzes the NADPH-dependent rearrangement and reduction of 1-deoxy-D-xylulose-5-phosphate (DXP) to 2-C-methyl-D-erythritol 4-phosphate (MEP). This is 1-deoxy-D-xylulose 5-phosphate reductoisomerase from Bacillus cereus (strain ATCC 10987 / NRS 248).